The following is a 165-amino-acid chain: UPF0303 protein BMA1246 (165 aa).

It belongs to the UPF0303 family.

The polypeptide is UPF0303 protein BMA1246 (Burkholderia mallei (strain ATCC 23344)).